The following is a 409-amino-acid chain: Tryptophan synthase beta chain 1 (409 aa).

Residue Lys104 is modified to N6-(pyridoxal phosphate)lysine.

The protein belongs to the TrpB family. As to quaternary structure, tetramer of two alpha and two beta chains. Pyridoxal 5'-phosphate serves as cofactor.

The catalysed reaction is (1S,2R)-1-C-(indol-3-yl)glycerol 3-phosphate + L-serine = D-glyceraldehyde 3-phosphate + L-tryptophan + H2O. The protein operates within amino-acid biosynthesis; L-tryptophan biosynthesis; L-tryptophan from chorismate: step 5/5. Functionally, the beta subunit is responsible for the synthesis of L-tryptophan from indole and L-serine. The chain is Tryptophan synthase beta chain 1 (trpB1) from Nostoc sp. (strain PCC 7120 / SAG 25.82 / UTEX 2576).